The sequence spans 178 residues: RNA pyrophosphohydrolase (178 aa).

The Nudix hydrolase domain occupies 18–171 (PYRPCVGLMV…KRKVYEQVVA (154 aa)). Residues 59–80 (GGIDKGEDPAQAALRELYEETG) carry the Nudix box motif.

Belongs to the Nudix hydrolase family. RppH subfamily. Requires a divalent metal cation as cofactor.

In terms of biological role, accelerates the degradation of transcripts by removing pyrophosphate from the 5'-end of triphosphorylated RNA, leading to a more labile monophosphorylated state that can stimulate subsequent ribonuclease cleavage. The protein is RNA pyrophosphohydrolase of Brucella melitensis biotype 2 (strain ATCC 23457).